Reading from the N-terminus, the 107-residue chain is U1-lycotoxin-Ls1a (107 aa).

A signal peptide spans 1–20; it reads MMKVLVVVALLVTLISYSSS. Residues 21-41 constitute a propeptide that is removed on maturation; it reads EGIDDLEADELLSLMANEQTR. Disulfide bonds link Cys-44-Cys-59, Cys-51-Cys-68, Cys-58-Cys-86, and Cys-70-Cys-84.

It belongs to the neurotoxin 19 (CSTX) family. 04 (U1-Lctx) subfamily. In terms of tissue distribution, expressed by the venom gland.

It localises to the secreted. The chain is U1-lycotoxin-Ls1a from Lycosa singoriensis (Wolf spider).